A 555-amino-acid polypeptide reads, in one-letter code: Glucose-6-phosphate isomerase (555 aa).

Glu360 functions as the Proton donor in the catalytic mechanism. Active-site residues include His391 and Lys519.

It belongs to the GPI family.

It localises to the cytoplasm. The catalysed reaction is alpha-D-glucose 6-phosphate = beta-D-fructose 6-phosphate. It functions in the pathway carbohydrate biosynthesis; gluconeogenesis. The protein operates within carbohydrate degradation; glycolysis; D-glyceraldehyde 3-phosphate and glycerone phosphate from D-glucose: step 2/4. In terms of biological role, catalyzes the reversible isomerization of glucose-6-phosphate to fructose-6-phosphate. The sequence is that of Glucose-6-phosphate isomerase from Acinetobacter baumannii (strain AB307-0294).